A 916-amino-acid polypeptide reads, in one-letter code: Extracellular signal-regulated kinase 7 (916 aa).

The Protein kinase domain occupies 25-319 (FDVRKRMGKG…AKEAIRHPYV (295 aa)). ATP is bound by residues 31 to 39 (MGKGAYGIV) and Lys54. The Proton acceptor role is filled by Asp149. 2 stretches are compositionally biased toward polar residues: residues 364–376 (CSNR…TPSS) and 390–403 (QART…TTSP). Disordered stretches follow at residues 364-419 (CSNR…TQSR), 452-477 (PPAA…KSVP), 588-608 (PSET…QMKR), 711-742 (KKLQ…SQNY), 792-813 (ELNP…PGRD), and 883-916 (CRHR…PESN). Composition is skewed to basic and acidic residues over residues 590–608 (ETEH…QMKR), 715–730 (RSKE…RRAL), and 800–811 (GGRDSGSEHSPG). The segment covering 883–892 (CRHRHHKPNH) has biased composition (basic residues). The span at 894-903 (APYDHMRPTE) shows a compositional bias: basic and acidic residues.

It belongs to the protein kinase superfamily. Ser/Thr protein kinase family.

It catalyses the reaction L-seryl-[protein] + ATP = O-phospho-L-seryl-[protein] + ADP + H(+). The enzyme catalyses L-threonyl-[protein] + ATP = O-phospho-L-threonyl-[protein] + ADP + H(+). Its function is as follows. Atypical MAPK protein that regulates protein secretion in a kinase activity-dependent manner. In response to starvation regulates protein secretion by mediating transitional endoplasmic reticulum site disassembly. Mediates inhibition of insulin-like peptide secretion upon disturbed ribosome biogenesis and acts as a downstream effector of TP53. In Drosophila melanogaster (Fruit fly), this protein is Extracellular signal-regulated kinase 7.